A 266-amino-acid chain; its full sequence is Translation initiation factor 2 subunit alpha (266 aa).

Residues 12–83 (GEILIATVKQ…RKGTVDVSLK (72 aa)) enclose the S1 motif domain.

It belongs to the eIF-2-alpha family. As to quaternary structure, heterotrimer composed of an alpha, a beta and a gamma chain.

Its function is as follows. eIF-2 functions in the early steps of protein synthesis by forming a ternary complex with GTP and initiator tRNA. The sequence is that of Translation initiation factor 2 subunit alpha from Saccharolobus solfataricus (strain ATCC 35092 / DSM 1617 / JCM 11322 / P2) (Sulfolobus solfataricus).